A 593-amino-acid polypeptide reads, in one-letter code: Protein PSP2 (593 aa).

Basic and acidic residues predominate over residues 56 to 65 (AGEHQRDGHQ). The segment at 56-101 (AGEHQRDGHQQHPHGGHGPMNRSRFSNAGPFGGGSMGDFANHHHPL) is disordered. S150 and S238 each carry phosphoserine. 2 disordered regions span residues 227 to 248 (KPFITKTQRSKSNPFGSAKPVD) and 280 to 593 (DSMA…DMPL). Polar residues-rich tracts occupy residues 231 to 241 (TKTQRSKSNPF) and 280 to 290 (DSMATTATGSK). S340 carries the phosphoserine modification. The segment covering 347 to 402 (SKPDKSDEFKGGDEQGFEKGGDDKAQLDVSNDKDKGSETDVDKQFTFKNVEREHSM) has biased composition (basic and acidic residues). Positions 408–426 (NGNHNNNNGNFRGSNRYRG) are enriched in low complexity. Omega-N-methylarginine is present on residues R419, R425, and R440. The residue at position 443 (R443) is a Dimethylated arginine. Position 447 is an omega-N-methylarginine (R447). The segment covering 449–477 (GSSYNNNNNNTNDNNNNNNNSSSNNNNGS) has biased composition (low complexity). Polar residues-rich tracts occupy residues 486 to 497 (EEGLTSDSSLDA) and 505 to 516 (FTNSTSNTQQYS). S522 is modified (phosphoserine). The span at 534-545 (RNNGRGNYNSSG) shows a compositional bias: low complexity. Omega-N-methylarginine is present on residues R538, R551, and R575. Over residues 546 to 563 (MNGGSRGRGFGRGRGFGR) the composition is skewed to gly residues. The span at 578 to 587 (SGNYSNYNNR) shows a compositional bias: low complexity.

Its subcellular location is the cytoplasm. It is found in the P-body. The protein localises to the stress granule. Functionally, DNA polymerase alpha mutation suppressor. Suppressor of group II intron splicing defects of a mutation in MRS2. May play a role in mitochondrial mRNA splicing. The sequence is that of Protein PSP2 from Saccharomyces cerevisiae (strain ATCC 204508 / S288c) (Baker's yeast).